A 942-amino-acid polypeptide reads, in one-letter code: Valine--tRNA ligase (942 aa).

The 'HIGH' region motif lies at 43–53 (PNVTGTLHMGH). The 'KMSKS' region signature appears at 551–555 (KMSKS). ATP is bound at residue Lys-554. A coiled-coil region spans residues 876–942 (EGLVDLDAER…AGLREQRAKL (67 aa)).

It belongs to the class-I aminoacyl-tRNA synthetase family. ValS type 1 subfamily. In terms of assembly, monomer.

Its subcellular location is the cytoplasm. The catalysed reaction is tRNA(Val) + L-valine + ATP = L-valyl-tRNA(Val) + AMP + diphosphate. Catalyzes the attachment of valine to tRNA(Val). As ValRS can inadvertently accommodate and process structurally similar amino acids such as threonine, to avoid such errors, it has a 'posttransfer' editing activity that hydrolyzes mischarged Thr-tRNA(Val) in a tRNA-dependent manner. The protein is Valine--tRNA ligase of Stenotrophomonas maltophilia (strain K279a).